The chain runs to 559 residues: Acetylcholinesterase-1 (559 aa).

An N-terminal signal peptide occupies residues 1 to 21 (MMLPRCFVTVLLMSSVLYIGG). Cys-92 and Cys-114 are oxidised to a cystine. 142–143 (GG) serves as a coordination point for substrate. The active-site Acyl-ester intermediate is Ser-223. At Ser-223 the chain carries Phosphoserine. Residues Cys-276 and Cys-293 are joined by a disulfide bond. 2 N-linked (GlcNAc...) asparagine glycosylation sites follow: Asn-278 and Asn-342. Glu-354 (charge relay system) is an active-site residue. N-linked (GlcNAc...) asparagine glycosylation occurs at Asn-374. An intrachain disulfide couples Cys-432 to Cys-550. Catalysis depends on His-471, which acts as the Charge relay system.

The protein belongs to the type-B carboxylesterase/lipase family. Expressed by the venom gland.

It is found in the secreted. It carries out the reaction acetylcholine + H2O = choline + acetate + H(+). Its function is as follows. Terminates signal transduction at the neuromuscular junction by rapid hydrolysis of the acetylcholine released into the synaptic cleft. This Trittame loki (Brush-footed trapdoor spider) protein is Acetylcholinesterase-1.